Reading from the N-terminus, the 513-residue chain is tRNA A64-2'-O-ribosylphosphate transferase (513 aa).

Its function is as follows. tRNA backbone modifying enzyme that mediates initiator/ elongator tRNA discrimination. This enzyme modifies exclusively the initiator tRNA in position 64 using 5'-phosphoribosyl-1'-pyrophosphate as the modification donor. Recognize the stem-loop IV region that is unique in eukaryotic cytoplasmic initiator tRNAs. The chain is tRNA A64-2'-O-ribosylphosphate transferase (RIT1) from Saccharomyces cerevisiae (strain ATCC 204508 / S288c) (Baker's yeast).